The following is a 314-amino-acid chain: MEESVGSRGGGGGGLDAQIEQLMECRPLSEPEVKTLCEKAKEILMEESNVQPVKSPVTICGDIHGQFHDLVELFRIGGKCPDTNYLFMGDYVDRGYYSVETVTLLVALKVRYPQRITILRGNHESRQITQVYGFYDECLRKYGSANVWKIFTDLFDYFPLTALVESEIFCLHGGLSPSIDNLDSVRSLDRVQEVPHEGPMCDLLWSDPDDRCGWGISPRGAGYTFGQDISEQFNHTNNLKLVARAHQLVMEGYNWAHEQKVVTIFSAPNYCYRCGNMASILEVDDCRNHTFIQFEPAPRRGEPDVTRRTPDYFL.

The Mn(2+) site is built by Asp-62, His-64, Asp-90, and Asn-122. His-123 acts as the Proton donor in catalysis. Mn(2+) is bound by residues His-172 and His-246.

This sequence belongs to the PPP phosphatase family. PP-2A subfamily. Requires Mn(2+) as cofactor.

Its subcellular location is the cytoplasm. The catalysed reaction is O-phospho-L-seryl-[protein] + H2O = L-seryl-[protein] + phosphate. It carries out the reaction O-phospho-L-threonyl-[protein] + H2O = L-threonyl-[protein] + phosphate. In Oryza sativa subsp. japonica (Rice), this protein is Serine/threonine-protein phosphatase PP2A-4 catalytic subunit (PP2A4).